The primary structure comprises 257 residues: DNA repair protein RecO (257 aa).

It belongs to the RecO family.

Its function is as follows. Involved in DNA repair and RecF pathway recombination. The sequence is that of DNA repair protein RecO from Variovorax paradoxus (strain S110).